The chain runs to 341 residues: Pyrophosphate--fructose 6-phosphate 1-phosphotransferase (341 aa).

G10 is a binding site for diphosphate. E103 provides a ligand contact to Mg(2+). Substrate-binding positions include 125–127, R162, 169–171, E221, R265, and 271–274; these read TID, MGR, and HVQR. Catalysis depends on D127, which acts as the Proton acceptor.

This sequence belongs to the phosphofructokinase type A (PFKA) family. Mixed-substrate PFK group III subfamily. In terms of assembly, homodimer or homotetramer. The cofactor is Mg(2+).

The protein resides in the cytoplasm. It catalyses the reaction beta-D-fructose 6-phosphate + diphosphate = beta-D-fructose 1,6-bisphosphate + phosphate + H(+). It functions in the pathway carbohydrate degradation; glycolysis; D-glyceraldehyde 3-phosphate and glycerone phosphate from D-glucose: step 3/4. Its activity is regulated as follows. Non-allosteric. Functionally, catalyzes the phosphorylation of D-fructose 6-phosphate, the first committing step of glycolysis. Uses inorganic phosphate (PPi) as phosphoryl donor instead of ATP like common ATP-dependent phosphofructokinases (ATP-PFKs), which renders the reaction reversible, and can thus function both in glycolysis and gluconeogenesis. Consistently, PPi-PFK can replace the enzymes of both the forward (ATP-PFK) and reverse (fructose-bisphosphatase (FBPase)) reactions. In Amycolatopsis mediterranei (strain S699) (Nocardia mediterranei), this protein is Pyrophosphate--fructose 6-phosphate 1-phosphotransferase.